A 171-amino-acid chain; its full sequence is UPF0763 protein KHP_0657 (171 aa).

The protein belongs to the UPF0763 family.

In Helicobacter pylori (strain 51), this protein is UPF0763 protein KHP_0657.